A 386-amino-acid polypeptide reads, in one-letter code: Zinc transporter 7-A (386 aa).

At 1–37 the chain is on the cytoplasmic side; the sequence is MLPLSIKDDEYKPPKFNLARKVSGWIRSIFSDSTSRN. The helical transmembrane segment at 38–58 threads the bilayer; the sequence is LFCFLCLNLSFAFVELFYGIW. Residues 59 to 67 are Lumenal-facing; that stretch reads SNSLGLISD. The chain crosses the membrane as a helical span at residues 68–88; that stretch reads SFHMFFDCTALLAGLAASVIS. Over 89–102 the chain is Cytoplasmic; that stretch reads RWKTNEAFSYGYVR. The chain crosses the membrane as a helical span at residues 103–123; sequence AEVLAGFVNGLFLIFTAFFIF. Residues 124–140 are Lumenal-facing; it reads SEGVERALDTPEVHHER. A helical transmembrane segment spans residues 141–161; sequence LLPVSIMGLLVNIIGIFVFQH. The his-rich loop stretch occupies residues 161–222; sequence HGGGHGHSHE…GHSHDHSPKH (62 aa). The Cytoplasmic portion of the chain corresponds to 162–246; it reads GGGHGHSHES…KGSSKQILEG (85 aa). A disordered region spans residues 167–239; it reads HSHESGHGHS…DEPPEEHKGS (73 aa). Residues 228–238 show a composition bias toward basic and acidic residues; the sequence is CHDEPPEEHKG. The chain crosses the membrane as a helical span at residues 247–267; it reads VFLHIVADTLGSVGVIFSTIL. The Lumenal portion of the chain corresponds to 268–272; it reads MQRYG. A helical membrane pass occupies residues 273–293; it reads LMIADPICSMLIALLIFVSVI. At 294–386 the chain is on the cytoplasmic side; that stretch reads PLLKQSIGIL…LYVQIDFAAI (93 aa).

Belongs to the cation diffusion facilitator (CDF) transporter (TC 2.A.4) family. SLC30A subfamily. In terms of assembly, homooligomer.

The protein resides in the golgi apparatus membrane. It localises to the cytoplasmic vesicle. The protein localises to the golgi apparatus. Its subcellular location is the trans-Golgi network. It is found in the sarcoplasmic reticulum. The protein resides in the mitochondrion. The catalysed reaction is Zn(2+)(in) = Zn(2+)(out). Zinc ion transporter mediating zinc entry from the cytosol into the lumen of organelles along the secretory pathway. By contributing to zinc ion homeostasis within the early secretory pathway, regulates the activation and folding of enzymes like alkaline phosphatases. In Xenopus laevis (African clawed frog), this protein is Zinc transporter 7-A (slc30a7-a).